The primary structure comprises 86 residues: Large ribosomal subunit protein bL27 (86 aa).

Over residues 1–10 (MAQKKGGGST) the composition is skewed to gly residues. The tract at residues 1-20 (MAQKKGGGSTRNGRDSESKR) is disordered.

This sequence belongs to the bacterial ribosomal protein bL27 family.

This is Large ribosomal subunit protein bL27 from Bordetella avium (strain 197N).